The primary structure comprises 95 residues: Citrate lyase acyl carrier protein (95 aa).

Serine 14 carries the O-(phosphoribosyl dephospho-coenzyme A)serine modification.

Belongs to the CitD family. In terms of assembly, oligomer with a subunit composition of (alpha,beta,gamma)6.

Its subcellular location is the cytoplasm. Its function is as follows. Covalent carrier of the coenzyme of citrate lyase. The chain is Citrate lyase acyl carrier protein from Haemophilus influenzae (strain PittEE).